The sequence spans 270 residues: MVGMGDRLFNMVFTRRPPQSMSRCISDPGYRAAARFSYEEASAQYKVYVERLHSAGITVKELGPLEDYPDSVFIQDTAVIGGGSRVAVLARFGAPSRRGEEGHVVSILSSMGLEIHPVKPPGTLEGGDVLVTGEGVVFAGLSSRTNREGVETLKTAFPNVNVETLNAKGLHLLSHLGYLGKATLISAEGLYDKSIFKRHGFDLIEIPWEERDAANLLYLGEGRVLLPAGYNQTRDLLEQHGFRIVEAEIRQFMACMGGVTCLSLPIYNIL.

The active-site Proton donor is the His-171. Residue Cys-261 is the Nucleophile of the active site.

It belongs to the DDAH family.

This is an uncharacterized protein from Aeropyrum pernix (strain ATCC 700893 / DSM 11879 / JCM 9820 / NBRC 100138 / K1).